Here is a 383-residue protein sequence, read N- to C-terminus: Prokineticin receptor 2 (383 aa).

At 1 to 54 the chain is on the extracellular side; that stretch reads MGDQNGNTSFAPDLNPPQDHVSLLPLNYSYGDYDIPLDDDEDVTKTQTFFAAKI. 2 N-linked (GlcNAc...) asparagine glycosylation sites follow: Asn-7 and Asn-27. A helical membrane pass occupies residues 55-75; sequence VIGVALAGIMLVCGVGNFVFI. The Cytoplasmic segment spans residues 76–89; that stretch reads AALARYKKLRNLTN. A helical membrane pass occupies residues 90–110; the sequence is LLIANLAISDFLVAIVCCPFE. Over 111 to 136 the chain is Extracellular; sequence MDYYVVRQLSWEHGHVLCASVNYLRT. Cys-128 and Cys-207 are oxidised to a cystine. A helical membrane pass occupies residues 137 to 157; sequence VSLYVSTNALLAIAIDRYLAI. The Cytoplasmic segment spans residues 158–170; the sequence is VHPLKRMNYQTAS. Residues 171–191 form a helical membrane-spanning segment; the sequence is FLIALVWMVSILIAIPSAYFT. Residues 192–222 lie on the Extracellular side of the membrane; the sequence is TETILVIVKNQEKLFCGQIWPVDQQLYYKSY. A helical membrane pass occupies residues 223–243; the sequence is FLFVFGLEFVGPVVTMTLCYA. Over 244–272 the chain is Cytoplasmic; it reads RISQELWFKAVPGFQTEQIRKRLRCRRKT. The helical transmembrane segment at 273–293 threads the bilayer; that stretch reads VLLLMGILTAYVLCWAPFYGF. Residues 294-312 are Extracellular-facing; sequence TIVRDFFPTLVVKEKHYLT. A helical membrane pass occupies residues 313 to 333; the sequence is AFYVVECIAMSNSMINTICFV. Topologically, residues 334–383 are cytoplasmic; the sequence is TVKNNTMKYFKKMLLLHWRPSHYGSKSSADLDLKTSGVPATEEVDCIRLK.

This sequence belongs to the G-protein coupled receptor 1 family. In terms of assembly, homodimer. In terms of tissue distribution, abundantly expressed in the CNS and reproductive organs with the highest levels in the cerebrum, cerebellum, testis and ovary.

It localises to the cell membrane. Functionally, receptor for prokineticin 2. Exclusively coupled to the G(q) subclass of heteromeric G proteins. Activation leads to mobilization of calcium, stimulation of phosphoinositide turnover and activation of p44/p42 mitogen-activated protein kinase. This chain is Prokineticin receptor 2 (Prokr2), found in Rattus norvegicus (Rat).